The following is a 270-amino-acid chain: Type III pantothenate kinase (270 aa).

6 to 13 (DAGNTNIV) serves as a coordination point for ATP. Substrate is bound at residue 107–110 (GADR). D109 functions as the Proton acceptor in the catalytic mechanism. Residue D129 coordinates K(+). T132 lines the ATP pocket. Residue T184 participates in substrate binding.

It belongs to the type III pantothenate kinase family. As to quaternary structure, homodimer. It depends on NH4(+) as a cofactor. The cofactor is K(+).

It is found in the cytoplasm. It catalyses the reaction (R)-pantothenate + ATP = (R)-4'-phosphopantothenate + ADP + H(+). The protein operates within cofactor biosynthesis; coenzyme A biosynthesis; CoA from (R)-pantothenate: step 1/5. Functionally, catalyzes the phosphorylation of pantothenate (Pan), the first step in CoA biosynthesis. This is Type III pantothenate kinase from Gluconobacter oxydans (strain 621H) (Gluconobacter suboxydans).